A 141-amino-acid chain; its full sequence is MAKKVEKLVKLQIPAGKATPAPPVGPALGQAGINIMGFTKEFNARTADQAGMIIPVVISVYEDKSFTFITKTPPAAVLLKKAAGVEKGSGTPNKTKVATVTRAQVQKIAETKMPDLNAASLEAAMLMIEGTARSMGFTVTD.

It belongs to the universal ribosomal protein uL11 family. As to quaternary structure, part of the ribosomal stalk of the 50S ribosomal subunit. Interacts with L10 and the large rRNA to form the base of the stalk. L10 forms an elongated spine to which L12 dimers bind in a sequential fashion forming a multimeric L10(L12)X complex. Post-translationally, one or more lysine residues are methylated.

Forms part of the ribosomal stalk which helps the ribosome interact with GTP-bound translation factors. This Streptococcus suis (strain 05ZYH33) protein is Large ribosomal subunit protein uL11.